The chain runs to 404 residues: Serine/threonine-protein phosphatase 2A regulatory subunit rsa-1 (404 aa).

As to quaternary structure, part of a complex consisting of a common heterodimeric core enzyme, composed of catalytic subunit let-92 and constant regulatory subunit paa-1, that associates with a variety of regulatory subunits which confer distinct properties to the holoenzyme. Interacts with rsa-2, spd-5 and tpxl-1.

It is found in the cytoplasm. Its subcellular location is the cytoskeleton. The protein resides in the microtubule organizing center. The protein localises to the centrosome. Its function is as follows. Regulatory subunit of phosphatase let-92 which recruits let-92/paa-1 complex to the centrosomes, thereby regulating microtubule outgrowth from centrosomes and mitotic spindle assembly ensuring the stability of kinetochore microtubules. The sequence is that of Serine/threonine-protein phosphatase 2A regulatory subunit rsa-1 from Caenorhabditis elegans.